A 406-amino-acid polypeptide reads, in one-letter code: MFIILAAGHGKRMNSGLPKVLHKIGNFSMLQHIIYNARQLNPENISVVANLPLIERLKCLEDIQLITQESTLGTGDAVKTAVRNMKELSDSNIIVVQYGDTPLIKNSTITQMVSCLEGKALVCLGFKTSNKEYGRLIIENGSLREIVETQDDENSDEEFLANAGIMVAYAKNLRELVEKIECNGSTYEYYLTDIVSIAVKSNLNVGYVTTDEEEATGINSRNDLAKAEFYFQENRRKFFTDSGVTLVAPETVFFSLDTQIGMDSIIYPYVFFGPGVRIGPGAKIGPFTKCEDTTIGDGAIVGNFVEAKASDIGTNTKIKHLSYIGNTEVGRESNIGAGTVVCNYDGKKKHRTNIGSNCFVGANSSLIAPLNVHDESVIAAGSIIVKDVPKKRLVITRRKQMVKKIK.

The tract at residues 1-221 (MFIILAAGHG…EEEATGINSR (221 aa)) is pyrophosphorylase. Residues 5 to 8 (LAAG), Lys19, Gln68, 73 to 74 (GT), 98 to 100 (YGD), Gly134, Glu148, Asn162, and Asn219 each bind UDP-N-acetyl-alpha-D-glucosamine. Residue Asp100 participates in Mg(2+) binding. Asn219 is a Mg(2+) binding site. The segment at 222–242 (NDLAKAEFYFQENRRKFFTDS) is linker. An N-acetyltransferase region spans residues 243–406 (GVTLVAPETV…RRKQMVKKIK (164 aa)). Residue Lys308 participates in UDP-N-acetyl-alpha-D-glucosamine binding. The active-site Proton acceptor is His320. Tyr323 and Asn334 together coordinate UDP-N-acetyl-alpha-D-glucosamine. Residues Ala337, 343-344 (NY), Ala380, and Arg397 contribute to the acetyl-CoA site.

This sequence in the N-terminal section; belongs to the N-acetylglucosamine-1-phosphate uridyltransferase family. In the C-terminal section; belongs to the transferase hexapeptide repeat family. As to quaternary structure, homotrimer. Mg(2+) serves as cofactor.

The protein localises to the cytoplasm. It catalyses the reaction alpha-D-glucosamine 1-phosphate + acetyl-CoA = N-acetyl-alpha-D-glucosamine 1-phosphate + CoA + H(+). It carries out the reaction N-acetyl-alpha-D-glucosamine 1-phosphate + UTP + H(+) = UDP-N-acetyl-alpha-D-glucosamine + diphosphate. It functions in the pathway nucleotide-sugar biosynthesis; UDP-N-acetyl-alpha-D-glucosamine biosynthesis; N-acetyl-alpha-D-glucosamine 1-phosphate from alpha-D-glucosamine 6-phosphate (route II): step 2/2. Its pathway is nucleotide-sugar biosynthesis; UDP-N-acetyl-alpha-D-glucosamine biosynthesis; UDP-N-acetyl-alpha-D-glucosamine from N-acetyl-alpha-D-glucosamine 1-phosphate: step 1/1. The protein operates within bacterial outer membrane biogenesis; LPS lipid A biosynthesis. Its function is as follows. Catalyzes the last two sequential reactions in the de novo biosynthetic pathway for UDP-N-acetylglucosamine (UDP-GlcNAc). The C-terminal domain catalyzes the transfer of acetyl group from acetyl coenzyme A to glucosamine-1-phosphate (GlcN-1-P) to produce N-acetylglucosamine-1-phosphate (GlcNAc-1-P), which is converted into UDP-GlcNAc by the transfer of uridine 5-monophosphate (from uridine 5-triphosphate), a reaction catalyzed by the N-terminal domain. The polypeptide is Bifunctional protein GlmU (Wolbachia sp. subsp. Brugia malayi (strain TRS)).